A 322-amino-acid polypeptide reads, in one-letter code: 26S proteasome non-ATPase regulatory subunit 7 (322 aa).

Residues 9 to 144 (VVVHPLVLLS…TEAYISVEEV (136 aa)) enclose the MPN domain. Lys-180 is covalently cross-linked (Glycyl lysine isopeptide (Lys-Gly) (interchain with G-Cter in ubiquitin)). Lys-204, Lys-214, Lys-314, and Lys-315 each carry N6-acetyllysine. The interval 281-322 (ANRDAEKKEGQEKEDSKKDRKDDKEKEKEKSDVKKEEKKEKK) is disordered.

Belongs to the peptidase M67A family. As to quaternary structure, component of the 19S proteasome regulatory particle complex. The 26S proteasome consists of a 20S core particle (CP) and two 19S regulatory subunits (RP). The regulatory particle is made of a lid composed of 9 subunits including PSMD7, a base containing 6 ATPases and few additional components. Within the complex, PSMD7 interacts with subunit PSMD4 through their respective MPN domain. Interacts with TRIM5.

Component of the 26S proteasome, a multiprotein complex involved in the ATP-dependent degradation of ubiquitinated proteins. This complex plays a key role in the maintenance of protein homeostasis by removing misfolded or damaged proteins, which could impair cellular functions, and by removing proteins whose functions are no longer required. Therefore, the proteasome participates in numerous cellular processes, including cell cycle progression, apoptosis, or DNA damage repair. This is 26S proteasome non-ATPase regulatory subunit 7 (PSMD7) from Bos taurus (Bovine).